Here is a 528-residue protein sequence, read N- to C-terminus: Cytochrome P450 monooxygenase vrcB (528 aa).

The helical transmembrane segment at 5–27 (YGLFFAAVALYSVALVIYRLYLH) threads the bilayer. Cysteine 470 lines the heme pocket.

The protein belongs to the cytochrome P450 family. Requires heme as cofactor.

The protein localises to the membrane. The enzyme catalyses variecoladiene + 4 reduced [NADPH--hemoprotein reductase] + 4 O2 = variecolin + 4 oxidized [NADPH--hemoprotein reductase] + 6 H2O + 4 H(+). The protein operates within secondary metabolite biosynthesis; terpenoid biosynthesis. Cytochrome P450 monooxygenase; part of the gene cluster that mediates the biosynthesis of the sesterterpene variecolin. The first step in the pathway is performed by the variecoladiene synthase vrcA that possesses both prenyl transferase and terpene cyclase activity, converting isopentenyl diphosphate and dimethylallyl diphosphate into geranylfarnesyl pyrophosphate (GFPP) and then converting GFPP into the tetracyclic variecoladiene. The cytochrome P450 monooxygenase vrcB then catalyzes multiple oxidations at C-5 and C-20 positions to yield variecolin. The chain is Cytochrome P450 monooxygenase vrcB from Aspergillus aculeatus (strain ATCC 16872 / CBS 172.66 / WB 5094).